A 496-amino-acid polypeptide reads, in one-letter code: MNQYMLAIDQGTTSSRAILFNQKGEIVHMAQKEFTQYFPQPGWVEHNANEIWGSVLAVIASVLSEAQVKPEQVAGIGITNQRETTVVWEKDTGNPIYNAIVWQSRQTAGICDELKAKGYDPLFRKKTGLLIDAYFSGTKVKWILDHVDGARERAERGELLFGTIDTWLIWKLSGGRVHVTDYSNASRTLMFNIHTLEWDDELLDILGVPKAMLPEVRPSSEVYAKTAPYHFFGVEVPIAGAAGDQQAALFGQACFTEGMAKNTYGTGCFMLMNTGEKAVASKHGLLTTIAWGIDGKVEYALEGSIFVAGSAIQWLRDGLRMIKTAADSETYAEKVESTDGVYVVPAFIGLGTPYWDSEVRGAVFGLTRGTTKEHFIRATLESLAYQTKDVLAVMEADSGISLTTLRVDGGAVKNNFLMQFQSDLLAVPVERPVVNETTALGAAYLAGLAVGYWNSRDDIAAQWQLERRFEPKMDDDKRTMLYDGWKKAVRAAMAFK.

An ADP-binding site is contributed by Thr12. Residues Thr12, Thr13, and Ser14 each coordinate ATP. Thr12 is a binding site for sn-glycerol 3-phosphate. ADP is bound at residue Arg16. Residues Arg82, Glu83, and Tyr134 each contribute to the sn-glycerol 3-phosphate site. Residues Arg82, Glu83, and Tyr134 each contribute to the glycerol site. His230 carries the post-translational modification Phosphohistidine; by HPr. A sn-glycerol 3-phosphate-binding site is contributed by Asp244. Positions 244 and 245 each coordinate glycerol. ADP contacts are provided by Thr266 and Gly309. Thr266, Gly309, Gln313, and Gly410 together coordinate ATP. The ADP site is built by Gly410 and Asn414.

The protein belongs to the FGGY kinase family. In terms of processing, the phosphoenolpyruvate-dependent sugar phosphotransferase system (PTS), including enzyme I, and histidine-containing protein (HPr) are required for the phosphorylation of, which leads to the activation of the enzyme.

It catalyses the reaction glycerol + ATP = sn-glycerol 3-phosphate + ADP + H(+). It participates in polyol metabolism; glycerol degradation via glycerol kinase pathway; sn-glycerol 3-phosphate from glycerol: step 1/1. Inhibited by fructose 1,6-bisphosphate and p-chloromercuribenzoate (PCMB). Functionally, key enzyme in the regulation of glycerol uptake and metabolism. Catalyzes the phosphorylation of glycerol to yield sn-glycerol 3-phosphate. The protein is Glycerol kinase of Thermus thermophilus.